Here is a 411-residue protein sequence, read N- to C-terminus: Efflux pump periplasmic linker BepF (411 aa).

Residues 118–196 (FVLQKDALQA…SLEQAQINLG (79 aa)) adopt a coiled-coil conformation.

It belongs to the membrane fusion protein (MFP) (TC 8.A.1) family. In terms of assembly, probably part of a tripartite efflux pump, which is composed of an outer membrane efflux protein, an inner membrane protein and a protein that expands the periplasmic space. Could form a tripartite pump with BepC and BepG.

Its subcellular location is the periplasm. May contribute to resistance to some drugs, such as deoxycholate, sodium dodecyl sulfate and nalidixic acid, in the absence of BepD and BepE. The protein is Efflux pump periplasmic linker BepF (bepF) of Brucella suis biovar 1 (strain 1330).